The sequence spans 114 residues: Nucleoid-associated protein PCC8801_2554 (114 aa).

Belongs to the YbaB/EbfC family. Homodimer.

It is found in the cytoplasm. It localises to the nucleoid. In terms of biological role, binds to DNA and alters its conformation. May be involved in regulation of gene expression, nucleoid organization and DNA protection. This Rippkaea orientalis (strain PCC 8801 / RF-1) (Cyanothece sp. (strain PCC 8801)) protein is Nucleoid-associated protein PCC8801_2554.